Consider the following 185-residue polypeptide: ATP synthase subunit delta (185 aa).

It belongs to the ATPase delta chain family. In terms of assembly, F-type ATPases have 2 components, F(1) - the catalytic core - and F(0) - the membrane proton channel. F(1) has five subunits: alpha(3), beta(3), gamma(1), delta(1), epsilon(1). F(0) has three main subunits: a(1), b(2) and c(10-14). The alpha and beta chains form an alternating ring which encloses part of the gamma chain. F(1) is attached to F(0) by a central stalk formed by the gamma and epsilon chains, while a peripheral stalk is formed by the delta and b chains.

Its subcellular location is the cell inner membrane. Functionally, f(1)F(0) ATP synthase produces ATP from ADP in the presence of a proton or sodium gradient. F-type ATPases consist of two structural domains, F(1) containing the extramembraneous catalytic core and F(0) containing the membrane proton channel, linked together by a central stalk and a peripheral stalk. During catalysis, ATP synthesis in the catalytic domain of F(1) is coupled via a rotary mechanism of the central stalk subunits to proton translocation. Its function is as follows. This protein is part of the stalk that links CF(0) to CF(1). It either transmits conformational changes from CF(0) to CF(1) or is implicated in proton conduction. The chain is ATP synthase subunit delta from Coxiella burnetii (strain CbuG_Q212) (Coxiella burnetii (strain Q212)).